The primary structure comprises 332 residues: Palmitoyltransferase ZDHHC15B (332 aa).

The Cytoplasmic segment spans residues 1 to 14; sequence MALSRALRCCQRIF. The chain crosses the membrane as a helical span at residues 15 to 35; that stretch reads SWIPVIIISSVVLWSYYAYVF. At 36–50 the chain is on the lumenal side; sequence ELCFVTLSNNLERVT. The chain crosses the membrane as a helical span at residues 51–71; sequence YLLIFHVCFIMFCWTYWKAIF. Residues 72-166 lie on the Cytoplasmic side of the membrane; the sequence is TPPSTPTKKF…NNCVGFSNYK (95 aa). The DHHC domain maps to 123–173; sequence RFCDRCQVIKPDRCHHCSVCETCVLKMDHHCPWVNNCVGFSNYKFFLLFLS. C125 and C128 together coordinate Zn(2+). K132 contacts substrate. Positions 138, 139, 142, 145, and 152 each coordinate Zn(2+). Catalysis depends on C153, which acts as the S-palmitoyl cysteine intermediate. Zn(2+) is bound at residue C159. Residues 167 to 187 form a helical membrane-spanning segment; the sequence is FFLLFLSYSMIYCVFIASTVF. Residues 188-204 are Lumenal-facing; that stretch reads QYFLKFWVGDLPNGPAK. The helical transmembrane segment at 205–228 threads the bilayer; sequence FHVLFLLFVALMFFVSLMFLFGYH. Residues 229–332 are Cytoplasmic-facing; the sequence is CWLVAKNRST…GSSLLIRTES (104 aa). The disordered stretch occupies residues 305–332; sequence EEKWVEDGGSDEESADENGSSLLIRTES.

Belongs to the DHHC palmitoyltransferase family. Post-translationally, autopalmitoylated (in vitro).

The protein resides in the golgi apparatus membrane. It localises to the postsynaptic density. It carries out the reaction L-cysteinyl-[protein] + hexadecanoyl-CoA = S-hexadecanoyl-L-cysteinyl-[protein] + CoA. The catalysed reaction is L-cysteinyl-[protein] + tetradecanoyl-CoA = S-tetradecanoyl-L-cysteinyl-[protein] + CoA. It catalyses the reaction L-cysteinyl-[protein] + octadecanoyl-CoA = S-octadecanoyl-L-cysteinyl-[protein] + CoA. In terms of biological role, palmitoyltransferase that catalyzes the addition of palmitate onto various protein substrates. Has no stringent fatty acid selectivity and in addition to palmitate can also transfer onto target proteins myristate from tetradecanoyl-CoA and stearate from octadecanoyl-CoA. May thereby regulate target proteins association and localization to membranes. In the nervous system, probably catalyzes the palmitoylation of synaptic proteins and is involved in the differentiation of dopaminergic neurons and the development of the diencephalon. The chain is Palmitoyltransferase ZDHHC15B (zdhhc15b) from Danio rerio (Zebrafish).